The sequence spans 122 residues: Transcription initiation factor IIA subunit 2 (122 aa).

Residues S95 and S102 each carry the phosphoserine modification.

The protein belongs to the TFIIA subunit 2 family. In terms of assembly, TFIIA is a heterodimer composed of the large TOA1 and a small TOA2 subunits. Interacts with TBP. Interacts with TAF11. Interacts with KAP122.

It is found in the cytoplasm. The protein localises to the nucleus. Its function is as follows. TFIIA is a component of the transcription machinery of RNA polymerase II and plays an important role in transcriptional activation. TFIIA in a complex with TBP mediates transcriptional activity. The sequence is that of Transcription initiation factor IIA subunit 2 (TOA2) from Saccharomyces cerevisiae (strain ATCC 204508 / S288c) (Baker's yeast).